The sequence spans 402 residues: GDSL esterase/lipase At1g20120 (402 aa).

A signal peptide spans 1-35; that stretch reads MLQDRVSGSLSSSKISRCVLFLSLFCFFLLTMHAS. The tract at residues 41–69 is disordered; it reads RVPNPGPSPAPEPKPCPSPGPNPAPATTK. Pro residues predominate over residues 44–64; it reads NPGPSPAPEPKPCPSPGPNPA. N-linked (GlcNAc...) asparagine glycosylation occurs at Asn-73. The Nucleophile role is filled by Ser-85. Asn-314 and Asn-367 each carry an N-linked (GlcNAc...) asparagine glycan. Catalysis depends on residues Asp-375 and His-378.

It belongs to the 'GDSL' lipolytic enzyme family.

It localises to the secreted. This Arabidopsis thaliana (Mouse-ear cress) protein is GDSL esterase/lipase At1g20120.